The primary structure comprises 383 residues: Acetylornithine deacetylase (383 aa).

Residue His80 coordinates Zn(2+). Asp82 is a catalytic residue. Asp112 is a Zn(2+) binding site. Residue Glu144 is part of the active site. Positions 145, 169, and 355 each coordinate Zn(2+).

The protein belongs to the peptidase M20A family. ArgE subfamily. As to quaternary structure, homodimer. Zn(2+) is required as a cofactor. Requires Co(2+) as cofactor. It depends on glutathione as a cofactor.

The protein localises to the cytoplasm. It catalyses the reaction N(2)-acetyl-L-ornithine + H2O = L-ornithine + acetate. Its pathway is amino-acid biosynthesis; L-arginine biosynthesis; L-ornithine from N(2)-acetyl-L-ornithine (linear): step 1/1. Catalyzes the hydrolysis of the amide bond of N(2)-acetylated L-amino acids. Cleaves the acetyl group from N-acetyl-L-ornithine to form L-ornithine, an intermediate in L-arginine biosynthesis pathway, and a branchpoint in the synthesis of polyamines. The sequence is that of Acetylornithine deacetylase from Salmonella arizonae (strain ATCC BAA-731 / CDC346-86 / RSK2980).